The primary structure comprises 176 residues: NAD(P)H-quinone oxidoreductase subunit 6, chloroplastic (176 aa).

The next 5 helical transmembrane spans lie at 10-30, 32-52, 63-83, 92-112, and 152-172; these read FLLV…VLLT, PIFS…FYIL, LLIY…FMNS, LWTV…VSLV, and FFLP…GTIV.

This sequence belongs to the complex I subunit 6 family. In terms of assembly, NDH is composed of at least 16 different subunits, 5 of which are encoded in the nucleus.

Its subcellular location is the plastid. The protein localises to the chloroplast thylakoid membrane. It catalyses the reaction a plastoquinone + NADH + (n+1) H(+)(in) = a plastoquinol + NAD(+) + n H(+)(out). The catalysed reaction is a plastoquinone + NADPH + (n+1) H(+)(in) = a plastoquinol + NADP(+) + n H(+)(out). Functionally, NDH shuttles electrons from NAD(P)H:plastoquinone, via FMN and iron-sulfur (Fe-S) centers, to quinones in the photosynthetic chain and possibly in a chloroplast respiratory chain. The immediate electron acceptor for the enzyme in this species is believed to be plastoquinone. Couples the redox reaction to proton translocation, and thus conserves the redox energy in a proton gradient. This is NAD(P)H-quinone oxidoreductase subunit 6, chloroplastic (ndhG) from Cicer arietinum (Chickpea).